A 372-amino-acid chain; its full sequence is GTPase Obg (372 aa).

The Obg domain maps to 1 to 159; that stretch reads MKFVDEATIE…RRLRLELKVL (159 aa). The OBG-type G domain maps to 160 to 336; the sequence is ADVGLLGLPN…LIWALQDYLD (177 aa). GTP is bound by residues 166–173, 191–195, 213–216, 288–291, and 317–319; these read GLPNAGKS, FTTLH, DIPG, NKLD, and SGL. Residues Ser-173 and Thr-193 each coordinate Mg(2+). Residues 341-372 form a disordered region; it reads KEQITQDKADGSYVHEDPRFDTTRDAPPSGKD.

The protein belongs to the TRAFAC class OBG-HflX-like GTPase superfamily. OBG GTPase family. As to quaternary structure, monomer. The cofactor is Mg(2+).

It is found in the cytoplasm. An essential GTPase which binds GTP, GDP and possibly (p)ppGpp with moderate affinity, with high nucleotide exchange rates and a fairly low GTP hydrolysis rate. Plays a role in control of the cell cycle, stress response, ribosome biogenesis and in those bacteria that undergo differentiation, in morphogenesis control. This is GTPase Obg from Bordetella avium (strain 197N).